The following is a 340-amino-acid chain: Putative 2-hydroxyacid dehydrogenase C1773.17c (340 aa).

Residues 169 to 170, 249 to 251, and Asp275 each bind NAD(+); these read AI and TAR. Arg251 is an active-site residue. Residue Glu280 is part of the active site. Residue His298 is the Proton donor of the active site. NAD(+) is bound at residue 298–301; it reads HCGV.

It belongs to the D-isomer specific 2-hydroxyacid dehydrogenase family.

This Schizosaccharomyces pombe (strain 972 / ATCC 24843) (Fission yeast) protein is Putative 2-hydroxyacid dehydrogenase C1773.17c.